The sequence spans 331 residues: tRNA-modifying protein YgfZ (331 aa).

Trp28 and Trp191 together coordinate folate.

Belongs to the tRNA-modifying YgfZ family.

The protein resides in the cytoplasm. In terms of biological role, folate-binding protein involved in regulating the level of ATP-DnaA and in the modification of some tRNAs. It is probably a key factor in regulatory networks that act via tRNA modification, such as initiation of chromosomal replication. In Edwardsiella ictaluri (strain 93-146), this protein is tRNA-modifying protein YgfZ.